A 147-amino-acid chain; its full sequence is Acidic phospholipase A2 S9-53F (147 aa).

An N-terminal signal peptide occupies residues 1-19; that stretch reads MYPAHLLVLLAVCVSLLGA. Residues 20-27 constitute a propeptide that is removed on maturation; that stretch reads SDIPPQPL. Cystine bridges form between cysteine 38-cysteine 99, cysteine 54-cysteine 146, cysteine 56-cysteine 72, cysteine 71-cysteine 127, cysteine 78-cysteine 120, cysteine 88-cysteine 113, and cysteine 106-cysteine 118. 3 residues coordinate Ca(2+): tyrosine 55, glycine 57, and glycine 59. Histidine 75 is a catalytic residue. Position 76 (aspartate 76) interacts with Ca(2+). Aspartate 121 is an active-site residue.

This sequence belongs to the phospholipase A2 family. Group I subfamily. D49 sub-subfamily. It depends on Ca(2+) as a cofactor. As to expression, expressed by the venom gland.

The protein localises to the secreted. The enzyme catalyses a 1,2-diacyl-sn-glycero-3-phosphocholine + H2O = a 1-acyl-sn-glycero-3-phosphocholine + a fatty acid + H(+). In terms of biological role, snake venom phospholipase A2 (PLA2) that inhibits collagen-induced platelet aggregation. PLA2 catalyzes the calcium-dependent hydrolysis of the 2-acyl groups in 3-sn-phosphoglycerides. In Austrelaps superbus (Lowland copperhead snake), this protein is Acidic phospholipase A2 S9-53F.